A 298-amino-acid polypeptide reads, in one-letter code: ATP synthase gamma chain (298 aa).

The protein belongs to the ATPase gamma chain family. F-type ATPases have 2 components, CF(1) - the catalytic core - and CF(0) - the membrane proton channel. CF(1) has five subunits: alpha(3), beta(3), gamma(1), delta(1), epsilon(1). CF(0) has three main subunits: a, b and c.

The protein resides in the cell inner membrane. Functionally, produces ATP from ADP in the presence of a proton gradient across the membrane. The gamma chain is believed to be important in regulating ATPase activity and the flow of protons through the CF(0) complex. This Desulforapulum autotrophicum (strain ATCC 43914 / DSM 3382 / VKM B-1955 / HRM2) (Desulfobacterium autotrophicum) protein is ATP synthase gamma chain.